We begin with the raw amino-acid sequence, 240 residues long: tRNA pseudouridine synthase B (240 aa).

Asp-54 (nucleophile) is an active-site residue.

Belongs to the pseudouridine synthase TruB family. Type 1 subfamily.

It catalyses the reaction uridine(55) in tRNA = pseudouridine(55) in tRNA. Functionally, responsible for synthesis of pseudouridine from uracil-55 in the psi GC loop of transfer RNAs. The chain is tRNA pseudouridine synthase B from Chlorobium phaeovibrioides (strain DSM 265 / 1930) (Prosthecochloris vibrioformis (strain DSM 265)).